Consider the following 319-residue polypeptide: ADP-L-glycero-D-manno-heptose-6-epimerase (319 aa).

NADP(+) contacts are provided by residues 10-11, 31-32, lysine 38, lysine 53, and 75-79; these read FI, DD, and EGACS. The active-site Proton acceptor is the tyrosine 139. Lysine 143 lines the NADP(+) pocket. Asparagine 168 serves as a coordination point for substrate. NADP(+)-binding residues include valine 169 and lysine 177. Lysine 177 serves as the catalytic Proton acceptor. Substrate contacts are provided by residues serine 179, histidine 186, 200–203, arginine 213, and tyrosine 281; that span reads FEGA.

Belongs to the NAD(P)-dependent epimerase/dehydratase family. HldD subfamily. In terms of assembly, homopentamer. NADP(+) serves as cofactor.

It carries out the reaction ADP-D-glycero-beta-D-manno-heptose = ADP-L-glycero-beta-D-manno-heptose. Its pathway is nucleotide-sugar biosynthesis; ADP-L-glycero-beta-D-manno-heptose biosynthesis; ADP-L-glycero-beta-D-manno-heptose from D-glycero-beta-D-manno-heptose 7-phosphate: step 4/4. Its function is as follows. Catalyzes the interconversion between ADP-D-glycero-beta-D-manno-heptose and ADP-L-glycero-beta-D-manno-heptose via an epimerization at carbon 6 of the heptose. The sequence is that of ADP-L-glycero-D-manno-heptose-6-epimerase from Aromatoleum aromaticum (strain DSM 19018 / LMG 30748 / EbN1) (Azoarcus sp. (strain EbN1)).